The sequence spans 677 residues: L-type lectin-domain containing receptor kinase IV.2 (677 aa).

An N-terminal signal peptide occupies residues 1–22; sequence MFVKLKLIFFFFLLCQIMISSS. The Extracellular segment spans residues 23–291; the sequence is QNLNFTYNGF…EPRRISEFYK (269 aa). A legume-lectin like region spans residues 24-262; the sequence is NLNFTYNGFH…EHFLVGWSFR (239 aa). Residues Asn-26, Asn-57, Asn-81, Asn-128, Asn-134, Asn-171, Asn-186, and Asn-203 are each glycosylated (N-linked (GlcNAc...) asparagine). A helical transmembrane segment spans residues 292–312; that stretch reads IGMPLISLSLIFSIIFLAFYI. The Cytoplasmic portion of the chain corresponds to 313–677; the sequence is VRRKKKYEEE…IADSLLSGGR (365 aa). In terms of domain architecture, Protein kinase spans 347 to 625; it reads FKEKDLLGSG…LQYLRGDMAL (279 aa). Residues 353–361 and Lys-376 contribute to the ATP site; that span reads LGSGGFGRV. Asp-472 serves as the catalytic Proton acceptor.

This sequence in the C-terminal section; belongs to the protein kinase superfamily. Ser/Thr protein kinase family. It in the N-terminal section; belongs to the leguminous lectin family.

It localises to the cell membrane. It carries out the reaction L-seryl-[protein] + ATP = O-phospho-L-seryl-[protein] + ADP + H(+). The enzyme catalyses L-threonyl-[protein] + ATP = O-phospho-L-threonyl-[protein] + ADP + H(+). In terms of biological role, required during pollen development. Its function is as follows. Involved in resistance response to the pathogenic bacteria Pseudomonas syringae. The protein is L-type lectin-domain containing receptor kinase IV.2 of Arabidopsis thaliana (Mouse-ear cress).